The primary structure comprises 764 residues: Nucleolar complex-associated protein 2 (764 aa).

The stretch at 3–69 forms a coiled coil; the sequence is AKDDKKRVKK…EEELKRLQEK (67 aa). Disordered stretches follow at residues 23 to 67, 89 to 113, 627 to 646, and 651 to 726; these read ELNN…KRLQ, ATEI…EGDD, AVFG…DRME, and AFNS…EDDA. A compositionally biased stretch (basic and acidic residues) spans 30–41; it reads IDAHDIVMEQKS. Basic residues predominate over residues 42 to 51; it reads DKKRGKKVKS. A compositionally biased stretch (basic and acidic residues) spans 52–67; it reads KKAEAEEHEEELKRLQ. Residues 90-113 are compositionally biased toward acidic residues; sequence TEIEDDADVEPDTDLEDTEKEGDD. Basic and acidic residues predominate over residues 661–672; it reads DSKEKEPEEEKT. Residues 673–680 carry the Nuclear localization signal 1 motif; that stretch reads KKKKRKRG. Positions 673 to 682 are enriched in basic residues; the sequence is KKKKRKRGGK. The span at 693–726 shows a compositional bias: acidic residues; it reads GLGEDDVVEDFVLSSDEEEEDLFDIGGDKDEDDA. Residues 738–745 carry the Nuclear localization signal 2 motif; sequence SKKTKGTY.

The protein belongs to the NOC2 family. As to quaternary structure, component of nucleolar complexes. Forms homodimers. Interacts with RBL and NOC3 in both the nucleolus and nucleoplasm. Binds to SWA2.

The protein resides in the nucleus. The protein localises to the nucleolus. Its subcellular location is the nucleoplasm. Functionally, together with SWA2, probably involved in pre-ribosome export from the nucleus to the cytoplasm. The sequence is that of Nucleolar complex-associated protein 2 from Arabidopsis thaliana (Mouse-ear cress).